A 168-amino-acid chain; its full sequence is Small ribosomal subunit protein uS9 (168 aa).

Positions 1 to 29 are enriched in low complexity; the sequence is MAQNEELTAEAVEAEETLTSYTSESTSAE. Positions 1–36 are disordered; the sequence is MAQNEELTAEAVEAEETLTSYTSESTSAEDAPKKER.

The protein belongs to the universal ribosomal protein uS9 family.

This is Small ribosomal subunit protein uS9 from Paenarthrobacter aurescens (strain TC1).